The chain runs to 116 residues: MNAVAEMPSPIVFSDSAAMKVAELIEEEGNPDLKLRVFVQGGGCSGFQYGFTFDEIVNEDDTTMTKNGVQLLIDSMSYQYLVGAEIDYKDDLEGAQFVIKNPNATTTCGCGSSFSA.

Iron-sulfur cluster contacts are provided by Cys44, Cys108, and Cys110.

It belongs to the HesB/IscA family. Homodimer. The cofactor is iron-sulfur cluster.

Functionally, required for insertion of 4Fe-4S clusters. The protein is Putative iron-sulfur cluster insertion protein ErpA of Janthinobacterium sp. (strain Marseille) (Minibacterium massiliensis).